Consider the following 298-residue polypeptide: Uricase (298 aa).

Catalysis depends on charge relay system residues lysine 18 and threonine 63. Residues threonine 63, aspartate 64, phenylalanine 165, arginine 182, valine 229, glutamine 230, and asparagine 256 each contribute to the urate site. Histidine 258 functions as the Charge relay system in the catalytic mechanism. The Microbody targeting signal motif lies at 296-298 (ARM).

It belongs to the uricase family. As to quaternary structure, homotetramer; dimer of dimers.

Its subcellular location is the peroxisome. The enzyme catalyses urate + O2 + H2O = 5-hydroxyisourate + H2O2. It participates in purine metabolism; urate degradation; (S)-allantoin from urate: step 1/3. Its activity is regulated as follows. Competitively inhibited by xanthine. Its function is as follows. Catalyzes the oxidation of uric acid to 5-hydroxyisourate, which is further processed to form (S)-allantoin. This is Uricase from Danio rerio (Zebrafish).